The chain runs to 205 residues: dITP/XTP pyrophosphatase (205 aa).

Residue 16–21 (TGNPGK) participates in substrate binding. Positions 48 and 77 each coordinate Mg(2+). The active-site Proton acceptor is Asp77. Residues Ser78, 162 to 165 (FGYD), Lys185, and 190 to 191 (HR) contribute to the substrate site.

This sequence belongs to the HAM1 NTPase family. In terms of assembly, homodimer. Requires Mg(2+) as cofactor.

The enzyme catalyses XTP + H2O = XMP + diphosphate + H(+). The catalysed reaction is dITP + H2O = dIMP + diphosphate + H(+). It catalyses the reaction ITP + H2O = IMP + diphosphate + H(+). Its function is as follows. Pyrophosphatase that catalyzes the hydrolysis of nucleoside triphosphates to their monophosphate derivatives, with a high preference for the non-canonical purine nucleotides XTP (xanthosine triphosphate), dITP (deoxyinosine triphosphate) and ITP. Seems to function as a house-cleaning enzyme that removes non-canonical purine nucleotides from the nucleotide pool, thus preventing their incorporation into DNA/RNA and avoiding chromosomal lesions. This is dITP/XTP pyrophosphatase from Erwinia tasmaniensis (strain DSM 17950 / CFBP 7177 / CIP 109463 / NCPPB 4357 / Et1/99).